A 439-amino-acid chain; its full sequence is Maintenance of mitochondrial morphology protein 1 (439 aa).

The Lumenal portion of the chain corresponds to 1–76 (MSQDLIETTA…NGNTWSFTQG (76 aa)). Residues 77 to 97 (LVIGQVSVIFIIIVFVKFFVF) form a helical membrane-spanning segment. At 98–439 (ADSSSHIPTK…TPGEYVNSNI (342 aa)) the chain is on the cytoplasmic side. Disordered regions lie at residues 125–145 (KHSN…SLDS), 309–336 (MNGY…DGGT), and 405–425 (REPV…GTSA). An SMP-LTD domain is found at 165-395 (ASESLDWFNV…EPRFQVVRLP (231 aa)). Low complexity-rich tracts occupy residues 315 to 326 (ENANGDGASSSN) and 410 to 424 (KKTT…NGTS).

The protein belongs to the MMM1 family. In terms of assembly, homodimer. Component of the ER-mitochondria encounter structure (ERMES) or MDM complex, composed of MMM1, MDM10, MDM12 and MDM34. An MMM1 homodimer associates with one molecule of MDM12 on each side in a pairwise head-to-tail manner, and the SMP-LTD domains of MMM1 and MDM12 generate a continuous hydrophobic tunnel for phospholipid trafficking.

The protein localises to the endoplasmic reticulum membrane. Functionally, component of the ERMES/MDM complex, which serves as a molecular tether to connect the endoplasmic reticulum (ER) and mitochondria. Components of this complex are involved in the control of mitochondrial shape and protein biogenesis, and function in nonvesicular lipid trafficking between the ER and mitochondria. The MDM12-MMM1 subcomplex functions in the major beta-barrel assembly pathway that is responsible for biogenesis of all outer membrane beta-barrel proteins, and acts in a late step after the SAM complex. The MDM10-MDM12-MMM1 subcomplex further acts in the TOM40-specific pathway after the action of the MDM12-MMM1 complex. Essential for establishing and maintaining the structure of mitochondria and maintenance of mtDNA nucleoids. The chain is Maintenance of mitochondrial morphology protein 1 from Candida albicans (strain SC5314 / ATCC MYA-2876) (Yeast).